Reading from the N-terminus, the 181-residue chain is Adenine phosphoribosyltransferase (181 aa).

This sequence belongs to the purine/pyrimidine phosphoribosyltransferase family. In terms of assembly, homodimer.

It localises to the cytoplasm. It carries out the reaction AMP + diphosphate = 5-phospho-alpha-D-ribose 1-diphosphate + adenine. It participates in purine metabolism; AMP biosynthesis via salvage pathway; AMP from adenine: step 1/1. Functionally, catalyzes a salvage reaction resulting in the formation of AMP, that is energically less costly than de novo synthesis. This chain is Adenine phosphoribosyltransferase, found in Cytophaga hutchinsonii (strain ATCC 33406 / DSM 1761 / CIP 103989 / NBRC 15051 / NCIMB 9469 / D465).